A 311-amino-acid polypeptide reads, in one-letter code: CID domain-containing protein 1 (311 aa).

The region spanning methionine 1–lysine 134 is the CID domain. Positions methionine 224 to serine 256 form a coiled coil.

This is CID domain-containing protein 1 (cids-1) from Caenorhabditis briggsae.